The sequence spans 815 residues: uncharacterized protein (815 aa).

The N-terminal stretch at 1–25 is a signal peptide; sequence MVVMKKKRILIVSAIVLLFLTVASA. A run of 6 helical transmembrane segments spans residues 127–147, 157–177, 311–331, 333–353, 372–392, and 401–421; these read FGEA…CVRG, ILFI…GYYM, SFIA…LAFF, FLLQ…FILA, VYLL…TCFI, and GFGM…IGFH. The segment at 483–815 is disordered; sequence KDGSNADGVT…DRLRRDERTR (333 aa). Residues 513-543 show a composition bias toward polar residues; it reads HAISRTPQKETANGIANHNSRSLKRNPQTLS. Composition is skewed to basic and acidic residues over residues 544-563 and 599-614; these read KEQE…ENKQ and QDKK…KEYV. A compositionally biased stretch (polar residues) spans 619–630; it reads KQPNNQQQTDDA. The span at 648–658 shows a compositional bias: basic and acidic residues; it reads ENEKDTERTDQ. Polar residues predominate over residues 665–678; it reads EQNQNLETDQQQDF. A compositionally biased stretch (basic and acidic residues) spans 696 to 705; that stretch reads KTAEIKRSDQ. Residues 720-732 are compositionally biased toward polar residues; it reads SPQSTKVENQPIA. Positions 734–757 are enriched in basic and acidic residues; the sequence is NERKIRPSEPAKVHSDGIRVDEKQ. Polar residues predominate over residues 773–793; sequence PSSQTIKRTEQSVNSFDQVSL. A compositionally biased stretch (basic and acidic residues) spans 796-815; the sequence is IARRSSSKVEDRLRRDERTR.

It localises to the cell membrane. This is an uncharacterized protein from Bacillus subtilis (strain 168).